The primary structure comprises 432 residues: MYDGLKGFREFYPGEMSARREVTDTIETRARRYGFREVGTPALERTQLYVDKSGEEIVEELYAFEDKGGREVSLTPELTPTVARMVVAKQQALAKPVKWFSTRPFWRYEQVQQGRFREFYQTNIDIFGSERPEADAEVLATAADALTDLGLDGADFEFRVSHRDILGGLLAAMDSDVDTTDAIRAVDKREKIDDEEYRSLLVGAGLTHEEADTFDSLLRTDDLSELVEFAGTDRVEAAVENLQAVLDAAADFGVREFCSVSLETARGLDYYTGVVFECFDTSGEVSRSVFGGGRYDDLIESFGGQPTPAVGVGIGHETLSLLCQRAGVWPAEELSTDYYVLTVGDTRDVALDVARELRALGHVVETDLSDRGFGDQLSYADGINAETVVVVGEQDLEDDAVTLKDMASGDQTQVPLAAFPPEEGRPTYDDYA.

The segment at 412-432 (TQVPLAAFPPEEGRPTYDDYA) is disordered. Positions 422 to 432 (EEGRPTYDDYA) are enriched in basic and acidic residues.

This sequence belongs to the class-II aminoacyl-tRNA synthetase family.

The protein resides in the cytoplasm. The enzyme catalyses tRNA(His) + L-histidine + ATP = L-histidyl-tRNA(His) + AMP + diphosphate + H(+). This chain is Histidine--tRNA ligase, found in Natronomonas pharaonis (strain ATCC 35678 / DSM 2160 / CIP 103997 / JCM 8858 / NBRC 14720 / NCIMB 2260 / Gabara) (Halobacterium pharaonis).